Consider the following 844-residue polypeptide: Protein translocase subunit SecA (844 aa).

ATP-binding positions include Q89, 107–111 (GEGKT), and D497. Residues C829, C831, C840, and H841 each contribute to the Zn(2+) site.

Belongs to the SecA family. Monomer and homodimer. Part of the essential Sec protein translocation apparatus which comprises SecA, SecYEG and auxiliary proteins SecDF. Other proteins may also be involved. It depends on Zn(2+) as a cofactor.

Its subcellular location is the cell membrane. The protein resides in the cytoplasm. The catalysed reaction is ATP + H2O + cellular proteinSide 1 = ADP + phosphate + cellular proteinSide 2.. Its function is as follows. Part of the Sec protein translocase complex. Interacts with the SecYEG preprotein conducting channel. Has a central role in coupling the hydrolysis of ATP to the transfer of proteins into and across the cell membrane, serving as an ATP-driven molecular motor driving the stepwise translocation of polypeptide chains across the membrane. The sequence is that of Protein translocase subunit SecA from Streptococcus suis (strain 98HAH33).